The primary structure comprises 155 residues: Transcriptional repressor NrdR (155 aa).

The segment at 3-34 (CPFCGNVDTQVKDSRPAEDHVAIRRRRFCPAC) is a zinc-finger region. Residues 49–139 (LVVIKSSGKR…VYKNFQAADD (91 aa)) enclose the ATP-cone domain.

Belongs to the NrdR family. Zn(2+) serves as cofactor.

Negatively regulates transcription of bacterial ribonucleotide reductase nrd genes and operons by binding to NrdR-boxes. This chain is Transcriptional repressor NrdR, found in Dinoroseobacter shibae (strain DSM 16493 / NCIMB 14021 / DFL 12).